The chain runs to 496 residues: Fatty acyl-CoA reductase 8 (496 aa).

The protein belongs to the fatty acyl-CoA reductase family.

The catalysed reaction is a long-chain fatty acyl-CoA + 2 NADPH + 2 H(+) = a long-chain primary fatty alcohol + 2 NADP(+) + CoA. Catalyzes the reduction of fatty acyl-CoA to fatty alcohols. Catalyzes specifically the formation of C16:0 fatty alcohol. The protein is Fatty acyl-CoA reductase 8 (FAR8) of Arabidopsis thaliana (Mouse-ear cress).